Reading from the N-terminus, the 130-residue chain is Histone H2A type 2-B (130 aa).

Residues 1-22 form a disordered region; the sequence is MSGRGKQGGKARAKAKSRSSRA. Ser2 carries the post-translational modification N-acetylserine. Ser2 carries the post-translational modification Phosphoserine; by RPS6KA5. Arg4 is subject to Citrulline; alternate. Residue Arg4 is modified to Symmetric dimethylarginine; by PRMT5; alternate. Lys6 and Lys10 each carry N6-(2-hydroxyisobutyryl)lysine; alternate. Residue Lys6 is modified to N6-(beta-hydroxybutyryl)lysine; alternate. Residues 7-19 show a composition bias toward basic residues; that stretch reads QGGKARAKAKSRS. Lys10 carries the N6-lactoyllysine; alternate modification. An N6-succinyllysine; alternate modification is found at Lys10. Glycyl lysine isopeptide (Lys-Gly) (interchain with G-Cter in ubiquitin) cross-links involve residues Lys14 and Lys16. Lys37 carries the N6-(2-hydroxyisobutyryl)lysine; alternate modification. Lys37 carries the post-translational modification N6-(beta-hydroxybutyryl)lysine; alternate. Lys37 carries the N6-crotonyllysine; alternate modification. An N6-(2-hydroxyisobutyryl)lysine mark is found at Lys75 and Lys76. Lys96 carries the post-translational modification N6-(2-hydroxyisobutyryl)lysine; alternate. Lys96 is subject to N6-succinyllysine; alternate. N6-glutaryllysine; alternate is present on Lys96. The residue at position 105 (Gln105) is an N5-methylglutamine. N6-(2-hydroxyisobutyryl)lysine; alternate is present on Lys119. N6-crotonyllysine; alternate is present on residues Lys119 and Lys120. 2 positions are modified to N6-glutaryllysine; alternate: Lys119 and Lys120. Lys120 is modified (N6-(beta-hydroxybutyryl)lysine; alternate). A Glycyl lysine isopeptide (Lys-Gly) (interchain with G-Cter in ubiquitin); alternate cross-link involves residue Lys120. The residue at position 121 (Thr121) is a Phosphothreonine; by DCAF1.

The protein belongs to the histone H2A family. As to quaternary structure, the nucleosome is a histone octamer containing two molecules each of H2A, H2B, H3 and H4 assembled in one H3-H4 heterotetramer and two H2A-H2B heterodimers. The octamer wraps approximately 147 bp of DNA. In terms of processing, deiminated on Arg-4 in granulocytes upon calcium entry. Post-translationally, monoubiquitination of Lys-120 (H2AK119Ub) by RING1, TRIM37 and RNF2/RING2 complex gives a specific tag for epigenetic transcriptional repression and participates in X chromosome inactivation of female mammals. It is involved in the initiation of both imprinted and random X inactivation. Ubiquitinated H2A is enriched in inactive X chromosome chromatin. Ubiquitination of H2A functions downstream of methylation of 'Lys-27' of histone H3 (H3K27me). H2AK119Ub by RNF2/RING2 can also be induced by ultraviolet and may be involved in DNA repair. Following DNA double-strand breaks (DSBs), it is ubiquitinated through 'Lys-63' linkage of ubiquitin moieties by the E2 ligase UBE2N and the E3 ligases RNF8 and RNF168, leading to the recruitment of repair proteins to sites of DNA damage. Ubiquitination at Lys-14 and Lys-16 (H2AK13Ub and H2AK15Ub, respectively) in response to DNA damage is initiated by RNF168 that mediates monoubiquitination at these 2 sites, and 'Lys-63'-linked ubiquitin are then conjugated to monoubiquitin; RNF8 is able to extend 'Lys-63'-linked ubiquitin chains in vitro. Deubiquitinated by USP51 at Lys-14 and Lys-16 (H2AK13Ub and H2AK15Ub, respectively) after damaged DNA is repaired. H2AK119Ub and ionizing radiation-induced 'Lys-63'-linked ubiquitination (H2AK13Ub and H2AK15Ub) are distinct events. Phosphorylation on Ser-2 (H2AS1ph) is enhanced during mitosis. Phosphorylation on Ser-2 by RPS6KA5/MSK1 directly represses transcription. Acetylation of H3 inhibits Ser-2 phosphorylation by RPS6KA5/MSK1. Phosphorylation at Thr-121 (H2AT120ph) by DCAF1 is present in the regulatory region of many tumor suppresor genes and down-regulates their transcription. In terms of processing, symmetric dimethylation on Arg-4 by the PRDM1/PRMT5 complex may play a crucial role in the germ-cell lineage. Post-translationally, glutamine methylation at Gln-105 (H2AQ104me) by FBL is specifically dedicated to polymerase I. It is present at 35S ribosomal DNA locus and impairs binding of the FACT complex. Crotonylation (Kcr) is specifically present in male germ cells and marks testis-specific genes in post-meiotic cells, including X-linked genes that escape sex chromosome inactivation in haploid cells. Crotonylation marks active promoters and enhancers and confers resistance to transcriptional repressors. It is also associated with post-meiotically activated genes on autosomes. In terms of processing, hydroxybutyrylation of histones is induced by starvation. Post-translationally, lactylated in macrophages by EP300/P300 by using lactoyl-CoA directly derived from endogenous or exogenous lactate, leading to stimulates gene transcription.

The protein resides in the nucleus. Its subcellular location is the chromosome. Core component of nucleosome. Nucleosomes wrap and compact DNA into chromatin, limiting DNA accessibility to the cellular machineries which require DNA as a template. Histones thereby play a central role in transcription regulation, DNA repair, DNA replication and chromosomal stability. DNA accessibility is regulated via a complex set of post-translational modifications of histones, also called histone code, and nucleosome remodeling. This chain is Histone H2A type 2-B, found in Mus musculus (Mouse).